The sequence spans 292 residues: (S)-phenoxypropionate/alpha-ketoglutarate-dioxygenase (292 aa).

H108 and D110 together coordinate Fe cation. 2-oxoglutarate-binding residues include T135 and W247. H262 contributes to the Fe cation binding site. R273 provides a ligand contact to 2-oxoglutarate.

The protein belongs to the TfdA dioxygenase family. As to quaternary structure, monomer. The cofactor is Fe cation. L-ascorbate is required as a cofactor.

The catalysed reaction is (S)-2-(4-chloro-2-methylphenoxy)propanoate + 2-oxoglutarate + O2 = 2-methyl-4-chlorophenol + pyruvate + succinate + CO2. It carries out the reaction (S)-(2,4-dichlorophenoxy)propanoate + 2-oxoglutarate + O2 = 2,4-dichlorophenol + pyruvate + succinate + CO2. The protein operates within xenobiotic degradation; 2-(2,4-dichlorophenoxy)propanoate degradation. With respect to regulation, inhibited by divalent cations, most significantly by copper and nickel, and by diethylpyrocarbonate (DEPC). Functionally, involved in the degradation of the phenoxypropionate herbicides. Catalyzes the enantiospecific cleavage of the ether bond in the herbicid S-dichlorprop ((S)-2-(2,4-dichlorophenoxy)propionate)(S-2,4-DP) and S-mecoprop ((S)-2-(4-chloro-2-methylphenoxy)propionate)(S-2,4-MCPP). It can also accept (RS)-2-(4-chlorophenoxy)propionate, (RS)-2-(m-chlorophenoxy)propionate and phenoxyacetate derivatives such as 2,4-dichlorophenoxyacetate (2,4-D), however it can only accept 2-oxoglutarate as oxygen acceptor. In Delftia acidovorans (Pseudomonas acidovorans), this protein is (S)-phenoxypropionate/alpha-ketoglutarate-dioxygenase.